Consider the following 553-residue polypeptide: Solute carrier family 45 member 3 (553 aa).

Helical transmembrane passes span 19–39, 52–72, 88–108, 120–140, 161–181, 198–218, 275–295, 323–343, 353–373, 382–402, and 522–542; these read LLINLLTFGLEVCLAAGITYV, FMTMVLGIGPVLGLVSVPLLG, FIWALSLGILLSLFLIPRAGW, LELALLILGVGLLDFCGQVCF, YSVYAFMISLGGCLGYLLPAI, CLFGLLTLIFLTCVAATLLVA, FVAELCSWMALMTFTLFYTDF, MGSLGLFLQCAISLVFSLVMD, AVYLASVAAFPVAAGATCLSH, AALTGFTFSALQILPYTLASL, and AYMVSAAGLGLVAIYFATQVV.

Belongs to the glycoside-pentoside-hexuronide (GPH) cation symporter transporter (TC 2.A.2) family.

The protein localises to the membrane. It carries out the reaction sucrose(out) + H(+)(out) = sucrose(in) + H(+)(in). In terms of biological role, proton-associated sucrose transporter. May be able to transport also glucose and fructose. The polypeptide is Solute carrier family 45 member 3 (SLC45A3) (Macaca fascicularis (Crab-eating macaque)).